A 630-amino-acid chain; its full sequence is Chaperone protein HtpG (630 aa).

The interval 1–343 is a; substrate-binding; the sequence is MAKHQFQTEA…SKDLPLNVSR (343 aa). The tract at residues 344–554 is b; sequence EILQSNAVMA…KEDPAFMMAQ (211 aa). Residues 555–630 are c; that stretch reads IMKQMGQSGD…RLNRVIAKAI (76 aa).

It belongs to the heat shock protein 90 family. In terms of assembly, homodimer.

The protein localises to the cytoplasm. Functionally, molecular chaperone. Has ATPase activity. This Sulfurimonas denitrificans (strain ATCC 33889 / DSM 1251) (Thiomicrospira denitrificans (strain ATCC 33889 / DSM 1251)) protein is Chaperone protein HtpG.